A 33-amino-acid polypeptide reads, in one-letter code: Cytochrome b6-f complex subunit 8 (33 aa).

A helical membrane pass occupies residues 2–22 (LFTIAWASLAAVFSFSIAMVV).

The protein belongs to the PetN family. In terms of assembly, the 4 large subunits of the cytochrome b6-f complex are cytochrome b6, subunit IV (17 kDa polypeptide, PetD), cytochrome f and the Rieske protein, while the 4 small subunits are PetG, PetL, PetM and PetN. The complex functions as a dimer.

The protein resides in the cellular thylakoid membrane. In terms of biological role, component of the cytochrome b6-f complex, which mediates electron transfer between photosystem II (PSII) and photosystem I (PSI), cyclic electron flow around PSI, and state transitions. The polypeptide is Cytochrome b6-f complex subunit 8 (Synechococcus sp. (strain CC9311)).